Here is a 165-residue protein sequence, read N- to C-terminus: Phosphopantetheine adenylyltransferase (165 aa).

Thr-10 is a binding site for substrate. Residues 10 to 11 (TF) and His-18 each bind ATP. Substrate is bound by residues Lys-42, Leu-75, and Arg-89. Residues 90–92 (GLR), Glu-100, and 125–131 (YTYVASS) contribute to the ATP site.

Belongs to the bacterial CoaD family. As to quaternary structure, homohexamer. Mg(2+) serves as cofactor.

It localises to the cytoplasm. The enzyme catalyses (R)-4'-phosphopantetheine + ATP + H(+) = 3'-dephospho-CoA + diphosphate. Its pathway is cofactor biosynthesis; coenzyme A biosynthesis; CoA from (R)-pantothenate: step 4/5. In terms of biological role, reversibly transfers an adenylyl group from ATP to 4'-phosphopantetheine, yielding dephospho-CoA (dPCoA) and pyrophosphate. This is Phosphopantetheine adenylyltransferase from Chlorobium phaeobacteroides (strain BS1).